A 211-amino-acid polypeptide reads, in one-letter code: Pyridoxine/pyridoxamine 5'-phosphate oxidase (211 aa).

Substrate-binding positions include 7–10 (RREY) and Lys-65. Residues 60–65 (RIVLLK), 75–76 (YT), Arg-81, Lys-82, and Gln-104 contribute to the FMN site. 3 residues coordinate substrate: Tyr-122, Arg-126, and Ser-130. FMN contacts are provided by residues 139–140 (QS) and Trp-184. 190 to 192 (RLH) lines the substrate pocket. Residue Arg-194 coordinates FMN.

Belongs to the pyridoxamine 5'-phosphate oxidase family. As to quaternary structure, homodimer. Requires FMN as cofactor.

It catalyses the reaction pyridoxamine 5'-phosphate + O2 + H2O = pyridoxal 5'-phosphate + H2O2 + NH4(+). The catalysed reaction is pyridoxine 5'-phosphate + O2 = pyridoxal 5'-phosphate + H2O2. Its pathway is cofactor metabolism; pyridoxal 5'-phosphate salvage; pyridoxal 5'-phosphate from pyridoxamine 5'-phosphate: step 1/1. The protein operates within cofactor metabolism; pyridoxal 5'-phosphate salvage; pyridoxal 5'-phosphate from pyridoxine 5'-phosphate: step 1/1. Its function is as follows. Catalyzes the oxidation of either pyridoxine 5'-phosphate (PNP) or pyridoxamine 5'-phosphate (PMP) into pyridoxal 5'-phosphate (PLP). This is Pyridoxine/pyridoxamine 5'-phosphate oxidase from Vibrio parahaemolyticus serotype O3:K6 (strain RIMD 2210633).